Here is a 189-residue protein sequence, read N- to C-terminus: ATP synthase subunit b (189 aa).

Residues 7–27 (LLIAALAVAPLAHAAEGGFVG) traverse the membrane as a helical segment.

The protein belongs to the ATPase B chain family. As to quaternary structure, F-type ATPases have 2 components, F(1) - the catalytic core - and F(0) - the membrane proton channel. F(1) has five subunits: alpha(3), beta(3), gamma(1), delta(1), epsilon(1). F(0) has three main subunits: a(1), b(2) and c(10-14). The alpha and beta chains form an alternating ring which encloses part of the gamma chain. F(1) is attached to F(0) by a central stalk formed by the gamma and epsilon chains, while a peripheral stalk is formed by the delta and b chains.

It is found in the cell inner membrane. F(1)F(0) ATP synthase produces ATP from ADP in the presence of a proton or sodium gradient. F-type ATPases consist of two structural domains, F(1) containing the extramembraneous catalytic core and F(0) containing the membrane proton channel, linked together by a central stalk and a peripheral stalk. During catalysis, ATP synthesis in the catalytic domain of F(1) is coupled via a rotary mechanism of the central stalk subunits to proton translocation. In terms of biological role, component of the F(0) channel, it forms part of the peripheral stalk, linking F(1) to F(0). The sequence is that of ATP synthase subunit b from Hyphomonas neptunium (strain ATCC 15444).